A 329-amino-acid polypeptide reads, in one-letter code: NADH-quinone oxidoreductase subunit H (329 aa).

A run of 8 helical transmembrane segments spans residues 9 to 29, 79 to 99, 117 to 137, 162 to 182, 188 to 208, 243 to 263, 269 to 289, and 309 to 329; these read ILKVLVVVAIFSALAGFLTYV, IAPVISAATAFIAMSAVPFFP, VGILFVLGVGAVGMYGPLLAG, VSGLSILAPLMMVGSLSLIEI, GGIFDWLVWSQPLAFLLFLIA, FFIGEYANMITLAFLVVLLFF, LWFIPGGIAILLKVAVFLFLF, and WKVLMPLALLNIVLTGIVLIL.

It belongs to the complex I subunit 1 family. In terms of assembly, NDH-1 is composed of 14 different subunits. Subunits NuoA, H, J, K, L, M, N constitute the membrane sector of the complex.

It is found in the cell inner membrane. The catalysed reaction is a quinone + NADH + 5 H(+)(in) = a quinol + NAD(+) + 4 H(+)(out). Its function is as follows. NDH-1 shuttles electrons from NADH, via FMN and iron-sulfur (Fe-S) centers, to quinones in the respiratory chain. The immediate electron acceptor for the enzyme in this species is believed to be ubiquinone. Couples the redox reaction to proton translocation (for every two electrons transferred, four hydrogen ions are translocated across the cytoplasmic membrane), and thus conserves the redox energy in a proton gradient. This subunit may bind ubiquinone. In Wolinella succinogenes (strain ATCC 29543 / DSM 1740 / CCUG 13145 / JCM 31913 / LMG 7466 / NCTC 11488 / FDC 602W) (Vibrio succinogenes), this protein is NADH-quinone oxidoreductase subunit H.